Reading from the N-terminus, the 1140-residue chain is Protein shank (1140 aa).

ANK repeat units lie at residues 144-174, 178-207, 211-242, 246-275, 279-309, and 312-341; these read QGET…HVDF, EGQT…SPNY, IGLT…DIGV, HGNH…QIDA, NGNS…HLAV, and QGQT…KSSV. The tract at residues 337–412 is disordered; the sequence is PKSSVPYRGT…ITPSEYGTMR (76 aa). Positions 351–364 are enriched in basic residues; the sequence is TRRRLSSTITRRRS. The segment covering 388-412 has biased composition (low complexity); the sequence is SAAPSPSPSRSSRTTITPSEYGTMR. Residues 436-529 form the PDZ domain; the sequence is ILVIPRGVKG…TITLKVITVD (94 aa). Composition is skewed to polar residues over residues 640 to 657 and 687 to 704; these read DQES…NSVS and TSTF…QLSR. 5 disordered regions span residues 640–673, 687–856, 875–902, 961–993, and 1008–1028; these read DQES…ASSA, TSTF…AASA, QLKK…STTD, KDSG…HSPN, and YGQK…SSTV. Composition is skewed to low complexity over residues 761–775 and 784–793; these read QHQN…QQHP and PQPIQQQQSS. Pro residues-rich tracts occupy residues 794-806 and 823-847; these read IPPP…PPHC and VPPP…PPPG. Residues 964–974 are compositionally biased toward polar residues; sequence GYTSSRTSLEP. Basic and acidic residues predominate over residues 977–988; that stretch reads SEEKDHRPHFSL. Positions 1015-1028 are enriched in low complexity; sequence SVASSSTASSSSTV. The SAM domain maps to 1078–1140; sequence WSVDDVIGWL…IESALRGLLQ (63 aa).

This sequence belongs to the SHANK family. As to quaternary structure, interacts (via PDZ domain) with egl-19 (via C-terminus). As to expression, expressed in the pharynx, pharyngeal-intestinal valve, intestine, rectal epithelial cells, tail neurons, nerve cord and sperm.

The protein resides in the cell projection. It localises to the pseudopodium. It is found in the cytoplasmic vesicle. The protein localises to the postsynaptic density. Scaffold protein that most likely acts in the postsynaptic density (PSD) of excitatory synapses which orchestrates synapse formation and maintenance at neuromuscular junctions. Associates with and trafficks the L-type calcium channel egl-19 to the cell surface of body wall muscles to ensure the function of the calcium channel and therefore maintain the Ca(2+) current density. The maintenance of Ca(2+) also allows for the downstream regulation of Ca(2+)-induced expression of genes such as gem-4. Plays a role in the regulation of the defecation cycle, and this may be in association with the inositol trisphosphate (IP3) receptor itr-1, which in turn mediates periodic calcium release and muscle contractions. Required for normal fertility and pharyngeal pumping. The protein is Protein shank of Caenorhabditis elegans.